A 349-amino-acid chain; its full sequence is DNA polymerase IV (349 aa).

The 182-residue stretch at 7-188 (IIHIDMDYFF…LPVKKLFGVG (182 aa)) folds into the UmuC domain. Mg(2+) is bound by residues D11 and D106. E107 is an active-site residue.

The protein belongs to the DNA polymerase type-Y family. As to quaternary structure, monomer. It depends on Mg(2+) as a cofactor.

Its subcellular location is the cytoplasm. The enzyme catalyses DNA(n) + a 2'-deoxyribonucleoside 5'-triphosphate = DNA(n+1) + diphosphate. Functionally, poorly processive, error-prone DNA polymerase involved in untargeted mutagenesis. Copies undamaged DNA at stalled replication forks, which arise in vivo from mismatched or misaligned primer ends. These misaligned primers can be extended by PolIV. Exhibits no 3'-5' exonuclease (proofreading) activity. May be involved in translesional synthesis, in conjunction with the beta clamp from PolIII. The polypeptide is DNA polymerase IV (Francisella tularensis subsp. holarctica (strain FTNF002-00 / FTA)).